Here is a 419-residue protein sequence, read N- to C-terminus: DNA ligase (419 aa).

Positions 1–120 are NTD; that stretch reads MLNHFPGHCS…ARQKRGAHTN (120 aa). An AD domain region spans residues 121 to 317; sequence TGMIPPMLVK…NYHSAHLAKL (197 aa). The active-site N6-AMP-lysine intermediate is Lys151. The OB domain stretch occupies residues 318–419; that stretch reads KPLLDAEFIL…REPINVLEII (102 aa).

This sequence belongs to the ATP-dependent DNA ligase family.

It is found in the virion. The catalysed reaction is ATP + (deoxyribonucleotide)n-3'-hydroxyl + 5'-phospho-(deoxyribonucleotide)m = (deoxyribonucleotide)n+m + AMP + diphosphate.. In terms of biological role, very low-fidelity DNA ligase that seals nicks in double-stranded DNA during DNA repair. Together with the viral repair DNA polymerase X, fills the single nucleotide gaps generated by the AP endonuclease. It is not essential for viral replication and recombination. Displays a very low adenylation activity towards DNA with 3'-dideoxy- or 3'-amino-terminated nicks compared to regular nick DNA. The protein is DNA ligase of Ornithodoros (relapsing fever ticks).